The primary structure comprises 32 residues: Cytochrome b6-f complex subunit 7 (32 aa).

The helical transmembrane segment at 9-27 (AAVFWVLIPVGLLGGAILL) threads the bilayer.

It belongs to the PetM family. The 4 large subunits of the cytochrome b6-f complex are cytochrome b6, subunit IV (17 kDa polypeptide, PetD), cytochrome f and the Rieske protein, while the 4 small subunits are PetG, PetL, PetM and PetN. The complex functions as a dimer.

It localises to the cellular thylakoid membrane. In terms of biological role, component of the cytochrome b6-f complex, which mediates electron transfer between photosystem II (PSII) and photosystem I (PSI), cyclic electron flow around PSI, and state transitions. In Prochlorococcus marinus (strain MIT 9211), this protein is Cytochrome b6-f complex subunit 7.